Reading from the N-terminus, the 349-residue chain is MGPISAPSCRWRIPWQGLLLTASLFTFWNPPTTAQLTIEAVPSNAAEGKEVLLLVHNLPQDPRGYNWYKGETVDANRRIIGYVISNQQITPGPAYSNRETIYPNASLLMRNVTRNDTGSYTLQVIKLNLMSEEVTGQFSVHPETPKPSISSNNSNPVEDKDAVAFTCEPETQNTTYLWWVNGQSLPVSPRLQLSNGNRTLTLLSVTRNDVGPYECEIQNPASANFSDPVTLNVLYGPDAPTISPSDTYYHAGVNLNLSCHAASNPPSQYSWSVNGTFQQYTQKLFIPNITTKNSGSYACHTTNSATGRNRTTVRMITVSDALVQGSSPGLSARATVSIMIGVLARVALI.

The first 34 residues, 1–34 (MGPISAPSCRWRIPWQGLLLTASLFTFWNPPTTA), serve as a signal peptide directing secretion. Residues 35–142 (QLTIEAVPSN…EVTGQFSVHP (108 aa)) enclose the Ig-like V-type domain. Asparagine 104, asparagine 111, asparagine 115, asparagine 152, asparagine 173, asparagine 197, asparagine 224, asparagine 256, asparagine 274, asparagine 288, and asparagine 309 each carry an N-linked (GlcNAc...) asparagine glycan. 2 consecutive Ig-like C2-type domains span residues 145 to 232 (PKPS…VTLN) and 237 to 319 (PDAP…ITVS). Cysteine 167 and cysteine 215 form a disulfide bridge. A disulfide bond links cysteine 259 and cysteine 299. Aspartate 320 is lipidated: GPI-anchor amidated aspartate. Positions 321-349 (ALVQGSSPGLSARATVSIMIGVLARVALI) are cleaved as a propeptide — removed in mature form.

The protein belongs to the immunoglobulin superfamily. CEA family. Monomer. Heterodimer with CEACAM6; heterodimerizes via its Ig-like V-type domain. Post-translationally, glycosylated. Expressed in leukocytes of chronic myeloid Leukemia patients and bone marrow.

It localises to the cell membrane. Its subcellular location is the cell surface. In terms of biological role, cell surface glycoprotein that plays a role in cell adhesion in a calcium-independent manner. Mediates heterophilic cell adhesion with other carcinoembryonic antigen-related cell adhesion molecules, such as CEACAM6. Heterophilic interaction with CEACAM8 occurs in activated neutrophils. This chain is Cell adhesion molecule CEACAM8, found in Homo sapiens (Human).